The chain runs to 262 residues: tRNA pseudouridine synthase A (262 aa).

The Nucleophile role is filled by D51. Y109 lines the substrate pocket.

The protein belongs to the tRNA pseudouridine synthase TruA family. Homodimer.

It carries out the reaction uridine(38/39/40) in tRNA = pseudouridine(38/39/40) in tRNA. In terms of biological role, formation of pseudouridine at positions 38, 39 and 40 in the anticodon stem and loop of transfer RNAs. This Actinobacillus pleuropneumoniae serotype 5b (strain L20) protein is tRNA pseudouridine synthase A.